A 260-amino-acid chain; its full sequence is Glutamate racemase (260 aa).

Substrate is bound by residues 7-8 (DS) and 39-40 (YG). Catalysis depends on Cys71, which acts as the Proton donor/acceptor. 72-73 (NT) lines the substrate pocket. The active-site Proton donor/acceptor is the Cys182. 183-184 (TH) lines the substrate pocket.

It belongs to the aspartate/glutamate racemases family.

The catalysed reaction is L-glutamate = D-glutamate. It functions in the pathway cell wall biogenesis; peptidoglycan biosynthesis. Functionally, provides the (R)-glutamate required for cell wall biosynthesis. The chain is Glutamate racemase from Sulfurihydrogenibium sp. (strain YO3AOP1).